A 110-amino-acid polypeptide reads, in one-letter code: MTKDAVNLDAYTVSFMPFYTEYQGPTEEFKDYKFEDTIYFRGKELKREKSATPSSSDNTTSNTFSNGAILSGNTITGKIVSVNNYEREGTDRNELARLQELISLIDVINQ.

The tract at residues 45–69 is disordered; sequence LKREKSATPSSSDNTTSNTFSNGAI. Over residues 51-66 the composition is skewed to low complexity; that stretch reads ATPSSSDNTTSNTFSN.

It belongs to the RNase H2 subunit C family. Highly divergent. In terms of assembly, the RNase 2 complex is a heterotrimer composed of the catalytic subunit RNH201 and of the non-catalytic subunits RNH202 and RNH203.

Its subcellular location is the cytoplasm. The protein resides in the nucleus. Functionally, non catalytic subunit of RNase H2, an endonuclease that specifically degrades the RNA of RNA:DNA hybrids. Participates in DNA replication, possibly by mediating the removal of lagging-strand Okazaki fragment RNA primers during DNA replication. Mediates the excision of single ribonucleotides from DNA:RNA duplexes. This Saccharomyces cerevisiae (strain ATCC 204508 / S288c) (Baker's yeast) protein is Ribonuclease H2 subunit C (RNH203).